The primary structure comprises 1003 residues: Glycine--tRNA ligase (1003 aa).

Residues methionine 1–cysteine 310 form a glycine--tRNA ligase alpha subunit region. The tract at residues glutamine 311–leucine 1003 is glycine--tRNA ligase beta subunit.

Belongs to the class-II aminoacyl-tRNA synthetase family.

The protein resides in the cytoplasm. The catalysed reaction is tRNA(Gly) + glycine + ATP = glycyl-tRNA(Gly) + AMP + diphosphate. The chain is Glycine--tRNA ligase (glyQS) from Chlamydia muridarum (strain MoPn / Nigg).